Reading from the N-terminus, the 172-residue chain is Transmembrane protein 91 (172 aa).

Disordered stretches follow at residues 1–31 (MDSP…RHEL) and 55–83 (PSVS…DWDG). The Extracellular portion of the chain corresponds to 1-97 (MDSPSLRELQ…SPFLPHDHLG (97 aa)). The span at 69-81 (VEDMSSSDSDSDW) shows a compositional bias: acidic residues. Residues 98–118 (LAVFSMLCCFWPVGIAAFCLA) traverse the membrane as a helical segment. At 119-139 (QKTNKAWAKGDIQGAGAASRR) the chain is on the cytoplasmic side. The helical transmembrane segment at 140 to 160 (AFLLGVLAVGLGVCTYAAALV) threads the bilayer. Residues 161-172 (TLAAYLASRDPP) are Extracellular-facing.

This sequence belongs to the CD225/Dispanin family.

It is found in the membrane. The sequence is that of Transmembrane protein 91 (TMEM91) from Homo sapiens (Human).